The following is a 115-amino-acid chain: Large ribosomal subunit protein bL20 (115 aa).

Belongs to the bacterial ribosomal protein bL20 family.

In terms of biological role, binds directly to 23S ribosomal RNA and is necessary for the in vitro assembly process of the 50S ribosomal subunit. It is not involved in the protein synthesizing functions of that subunit. This is Large ribosomal subunit protein bL20 from Mycoplasmoides gallisepticum (strain R(low / passage 15 / clone 2)) (Mycoplasma gallisepticum).